The primary structure comprises 146 residues: Hemoglobin subunit beta (146 aa).

V1 carries the N-acetylvaline modification. The region spanning 2 to 146 (HLTDAEKALV…VATALAHKYH (145 aa)) is the Globin domain. T12 bears the Phosphothreonine mark. A Phosphoserine modification is found at S44. K59 is subject to N6-acetyllysine. H63 provides a ligand contact to heme b. K82 carries the post-translational modification N6-acetyllysine. H92 contacts heme b. The residue at position 93 (C93) is an S-nitrosocysteine. K144 is subject to N6-acetyllysine.

It belongs to the globin family. In terms of assembly, heterotetramer of two alpha chains and two beta chains. In terms of tissue distribution, red blood cells.

Involved in oxygen transport from the lung to the various peripheral tissues. The protein is Hemoglobin subunit beta of Peromyscus crinitus (Canyon mouse).